The following is a 167-amino-acid chain: MPFSVTKFSLIFVALLLAEALVAQSSQLESVTRKPKPFFLVKKSMLVGMSETTEEVCQTVVLHNYEPVYGHLINGSLVEILQASGHKFSKTHVQCLEEDRPSCHGVKDDMYISECVTVYENANTMVRLFNSFGPYRLGTIRIPILCECRLRRQYRDFERPGDDDDDV.

An N-terminal signal peptide occupies residues 1–25 (MPFSVTKFSLIFVALLLAEALVAQS).

This is an uncharacterized protein from Caenorhabditis elegans.